The primary structure comprises 894 residues: MAEQLRFDGQVVVVTGAGGGLGKAYCLFFGSRGASVVVNDLGASFKGEGNSTKAADVVVNEIKAAGGKAVANYDSVENGDKIIETAIKEFGRIDILINNAGILRDISFKNMKDEDWDLIFKVHVKGSYKTARAAWPYFRKQKFGRVINTASAAGLFGNFGQANYSAAKLGMVGFTETLAKEGLKYNIISNVIAPIAASRMTETVMPPDLLALMKPEWVVPLVAVLVHKNNTSETGSIFEVGGGHVAKLRWERSSGLLLKADESYTPGAIIKKWDQVTDFSNPQYPTGPNDFLALLEESLKLGPNDPGEKVDFKGRVALVTGGGAGIGRAYCLAFARAGASVVVNDLVNPDDVVNEIKKMGGKAVGAKFSAEDGDAVVKAAIDAFGRVDIVVNNAGILRDKAFHNMDDSLWDPVMNVHARGTYKVTKAAWPYFLKQKYGRVLNTTSTSGIYGNFGQANYSAAKCAILGFSRAIALEGAKYNIYVNTIAPNAGTAMTKTILPEELVQAFKPDYVAPLVLALCSDKVPKKPTGGLYEVGSGWCGQTRWQRSGGHGFPVDVPLTPEEVVKHWNDIVTFDSRADHPEKASDSIEKIMANMENRVGEGKSGAAENEHLAAIKKFTGVEGKGTEYTFTERDVCLYNLGIGAKRTDIKYIFEGNEDFEVVPTFGVIPPFNTEMPFSFDDIVPNFSPMMLLHGEQYLEVRKYPIPTSGRLVSKGKLLEVVDKGSAAIVKQGITTFNAETGEELFYNEMTVFLRGCGGFGGQKKPADRGASTAANKPPARSPDAVVEVQTTEEQAAIYRLSGDYNPLHVDPAFAKVGGFKVPILHGLCSFGIAGKAVYEKYGKFKNIKVRFAGTVNPGQTLVTEMWKEGNKVVFQTKVKETGKLAISGAAAELA.

2 short-chain dehydrogenase like regions span residues 6-230 and 311-523; these read RFDG…HKNN and DFKG…CSDK. Residues valine 14, lysine 53, asparagine 99, arginine 132, tyrosine 164, lysine 168, and alanine 197 each coordinate NADP(+). Residue tyrosine 164 is the Proton acceptor of the active site. The active-site Lowers pKa of active site Tyr is lysine 168. Tyrosine 458 serves as the catalytic Proton acceptor. (3R)-3-hydroxydecanoyl-CoA is bound by residues histidine 693, glycine 694, and lysine 723. Residues 763–782 form a disordered region; it reads KKPADRGASTAANKPPARSP. Residues 776 to 887 enclose the MaoC-like domain; the sequence is KPPARSPDAV…VKETGKLAIS (112 aa). (3R)-3-hydroxydecanoyl-CoA-binding residues include aspartate 803, asparagine 805, glycine 826, phenylalanine 851, and glycine 853.

It belongs to the short-chain dehydrogenases/reductases (SDR) family. As to quaternary structure, monomer.

It localises to the peroxisome. The catalysed reaction is a (3R)-3-hydroxyacyl-CoA = a (2E)-enoyl-CoA + H2O. It catalyses the reaction a (3R)-3-hydroxyacyl-CoA + NAD(+) = a 3-oxoacyl-CoA + NADH + H(+). It functions in the pathway lipid metabolism; fatty acid beta-oxidation. Second trifunctional enzyme acting on the beta-oxidation pathway for fatty acids, possessing hydratase-dehydrogenase-epimerase activities. Converts trans-2-enoyl-CoA via D-3-hydroxyacyl-CoA to 3-ketoacyl-CoA. This chain is Peroxisomal hydratase-dehydrogenase-epimerase (fox-2), found in Neurospora crassa (strain ATCC 24698 / 74-OR23-1A / CBS 708.71 / DSM 1257 / FGSC 987).